The sequence spans 520 residues: DnaJ homolog l(2)tid, mitochondrial (520 aa).

A mitochondrion-targeting transit peptide spans 1 to 62 (MMISCKKLFV…RRLHTTRDLL (62 aa)). At arginine 30 the chain carries Omega-N-methylarginine. The 66-residue stretch at 65-130 (DYYATLGVAK…QKRREYDTYG (66 aa)) folds into the J domain. N6-acetyllysine is present on lysine 106. The segment at 214-292 (GVNKDVNVNV…CEGKGRTVQR (79 aa)) adopts a CR-type zinc-finger fold. Zn(2+) contacts are provided by cysteine 227, cysteine 230, cysteine 244, cysteine 247, cysteine 266, cysteine 269, cysteine 280, and cysteine 283. The stretch at 227–234 (CPKCAGTK) is one CXXCXGXG motif; approximate repeat. One copy of the CXXCXGXG motif repeat lies at 244–251 (CQYCNGTG). A CXXCXGXG motif; approximate repeat occupies 266-273 (CRYCQGTR). Residues 280 to 287 (CSECEGKG) form a CXXCXGXG motif repeat. The tract at residues 430–520 (QIHGIANRKD…FISKIKSMFN (91 aa)) is disordered. Positions 446–476 (AGASEEPGAGAAAKASAAAAGSGASKPGPGA) are enriched in low complexity. The span at 479–495 (SEGKDQWTDNKKTKAKE) shows a compositional bias: basic and acidic residues. Gly residues predominate over residues 496-511 (GGGSGSGQGDGGGGGF).

In terms of assembly, interacts with ptc (via C-terminal cytoplasmic region); the interaction is probably direct. Interacts with hh/hedgehog; the interaction is probably mediated by the hedgehog receptor ptc. In terms of processing, appears to produce proteins of differing size. Predicted to have a molecular mass of 56 kDa (TID56) however proteins of 50 kDa, 47 kDa and 40 kDa have been identified and named TID50, TID47 and TID40. TID50 and TID40 localize to the mitochondria while TID47 localizes to the cytoplasm. TID50 is probably TID56 that has undergone mitochondrial transit peptide processing. TID40 and TID47 may be alternately processed proteins or may be isoforms resulting from alternative splicing. In terms of tissue distribution, ubiquitously expressed throughout embryonic development. In larvae, expression is seen in sensory organs, gopplet cells, gonads, imaginal disks, proventriculus, fat body, hematopoietic organ, midgut, Malpighian tubules and ring gland.

The protein resides in the cytoplasm. It is found in the cytosol. The protein localises to the mitochondrion. Its subcellular location is the mitochondrion outer membrane. In terms of biological role, involved in hh/hedgehog signaling. May act as a tumor suppressor in larval imaginal disks. In Drosophila melanogaster (Fruit fly), this protein is DnaJ homolog l(2)tid, mitochondrial.